We begin with the raw amino-acid sequence, 693 residues long: MKIFREVFELGNKEIILETGGMARQADGSVTVSCGNNVVLVTTVVKKSVADGTDFFPLSVHYLEKTYAAGKIPGGFLRREGRPSEEQILISRLIDRSIRPSFPDGFFNEIQIVATVLSYDGAFSPDILALIGASASLAISGAPYDDVVAGVRVGYTNGKYILNPNKQDLRDSDLDLVVSGTYDAILMVESEANSLPESVMLGGILYAHKHLKTIINSINRLAKVASKPRIEYSIYQINKFLKSQIKSQFFGEIKNTYTIASKQERNLKLNAIRKNVLEYIFSSDVDGNEYTEKEILEAFHDIEKDLVRSNILEGKPRIDGRCTETIRPINVKIGVLPGVHGSALFTRGETQALVVTTLGSDRDAQLVESLDGIEKCRYMLHYNFPPYSVGECGMVGMAPKRREIGHANLAKRATQAVFPNEEAYPYVVRVVSEILESNGSSSMATVCGSSLSMMDAGVPIAEPVAGIAMGLIKDGAKYAVLSDILGDEDHLGDMDFKVAGTRYGVTALQMDIKIKGISREILEQALEQARVGRLHILGIMNEVIKEHKEAVSDVAPQIHVMNINPAKIKDVVGRGGATVKGIVEKTGAQIDTSDSGEVKVFAKDKKSMDMAVAMIEEIVAEVEEGQVYKGKIVKLLDSGVFVNLLGSQDGYLPFSEIEQAGMKTNSLVEGQGLEVLVQNIDRGGRVKLSLVAR.

2 residues coordinate Mg(2+): aspartate 489 and aspartate 495. Residues 556 to 615 enclose the KH domain; that stretch reads PQIHVMNINPAKIKDVVGRGGATVKGIVEKTGAQIDTSDSGEVKVFAKDKKSMDMAVAMI. The region spanning 625-693 is the S1 motif domain; sequence GQVYKGKIVK…GRVKLSLVAR (69 aa).

This sequence belongs to the polyribonucleotide nucleotidyltransferase family. Component of the RNA degradosome, which is a multiprotein complex involved in RNA processing and mRNA degradation. The cofactor is Mg(2+).

It is found in the cytoplasm. The catalysed reaction is RNA(n+1) + phosphate = RNA(n) + a ribonucleoside 5'-diphosphate. In terms of biological role, involved in mRNA degradation. Catalyzes the phosphorolysis of single-stranded polyribonucleotides processively in the 3'- to 5'-direction. This is Polyribonucleotide nucleotidyltransferase from Francisella tularensis subsp. holarctica (strain FTNF002-00 / FTA).